Here is a 723-residue protein sequence, read N- to C-terminus: Epidermal growth factor receptor kinase substrate 8-like protein 1 (723 aa).

Residues 35 to 164 (QYPVNHLVTF…LHNYRSGRGE (130 aa)) form the PTB domain. Positions 162–183 (RGERRAAALRATQEELQRDRSP) are enriched in basic and acidic residues. Disordered regions lie at residues 162–247 (RGER…PRGP), 442–477 (KQLQHERRRRQQSAPQVAVNGHRDLEPESEPQLESE), 537–589 (GPRL…GLDP), and 609–636 (LAQGRSGPSRAVPGPRAPEPQLSPGSDA). Residue Ser-182 is modified to Phosphoserine. Residue Thr-187 is modified to Phosphothreonine. The SH3 domain occupies 478-537 (TAGKWVLCNYDFQARNSSELSVKQRDVLEVLDDSRKWWKVRDPAGQEGYVPYNILTPYPG). The span at 543-552 (SQSPARSLNS) shows a compositional bias: polar residues. Residues 553–568 (TPPPPPAPAPAPPPAL) are compositionally biased toward pro residues. Basic and acidic residues predominate over residues 571 to 580 (PRWDRPRWDS). Residues 689-719 (VQRSLLEDKEKVSELEAVMEKQKKKVEGEVE) are a coiled coil.

The protein belongs to the EPS8 family. As to quaternary structure, interacts with ABI1. Part of a complex that contains SOS1, ABI1 and EPS8L2. Associates with F-actin. Detected in placenta.

It is found in the cytoplasm. In terms of biological role, stimulates guanine exchange activity of SOS1. May play a role in membrane ruffling and remodeling of the actin cytoskeleton. The protein is Epidermal growth factor receptor kinase substrate 8-like protein 1 (EPS8L1) of Homo sapiens (Human).